We begin with the raw amino-acid sequence, 450 residues long: Tubulin alpha-3 chain (450 aa).

Gln11 contributes to the GTP binding site. Position 40 is an N6-acetyllysine (Lys40). GTP is bound by residues Glu71, Gly144, Thr145, Thr179, Asn206, and Asn228. Glu71 contacts Mg(2+). Glu254 is an active-site residue.

Belongs to the tubulin family. In terms of assembly, dimer of alpha and beta chains. A typical microtubule is a hollow water-filled tube with an outer diameter of 25 nm and an inner diameter of 15 nM. Alpha-beta heterodimers associate head-to-tail to form protofilaments running lengthwise along the microtubule wall with the beta-tubulin subunit facing the microtubule plus end conferring a structural polarity. Microtubules usually have 13 protofilaments but different protofilament numbers can be found in some organisms and specialized cells. Mg(2+) serves as cofactor. Post-translationally, undergoes a tyrosination/detyrosination cycle, the cyclic removal and re-addition of a C-terminal tyrosine residue by the enzymes tubulin tyrosine carboxypeptidase (TTCP) and tubulin tyrosine ligase (TTL), respectively. In terms of processing, acetylation of alpha chains at Lys-40 stabilizes microtubules and affects affinity and processivity of microtubule motors. This modification has a role in multiple cellular functions, ranging from cell motility, cell cycle progression or cell differentiation to intracellular trafficking and signaling.

The protein localises to the cytoplasm. Its subcellular location is the cytoskeleton. It carries out the reaction GTP + H2O = GDP + phosphate + H(+). In terms of biological role, tubulin is the major constituent of microtubules, a cylinder consisting of laterally associated linear protofilaments composed of alpha- and beta-tubulin heterodimers. Microtubules grow by the addition of GTP-tubulin dimers to the microtubule end, where a stabilizing cap forms. Below the cap, tubulin dimers are in GDP-bound state, owing to GTPase activity of alpha-tubulin. In Zea mays (Maize), this protein is Tubulin alpha-3 chain (TUBA3).